Here is a 622-residue protein sequence, read N- to C-terminus: Mitochondrial distribution and morphology protein 34 (622 aa).

The SMP-LTD domain maps to 1 to 204 (MSFKVNWNSL…LPTLIHQLSL (204 aa)). Disordered regions lie at residues 364 to 393 (YSNK…DNTV), 442 to 468 (LETM…RAYQ), and 572 to 592 (LDGG…NFRP). Over residues 372–385 (KPKRRRIKVHKKSK) the composition is skewed to basic residues. Residues 446 to 455 (STGSSSSASS) show a composition bias toward low complexity. Residues 577–587 (NSANTNNSSGG) show a composition bias toward polar residues.

The protein belongs to the MDM34 family. In terms of assembly, component of the ER-mitochondria encounter structure (ERMES) or MDM complex, composed of MMM1, MDM10, MDM12 and MDM34.

It localises to the mitochondrion outer membrane. Functionally, component of the ERMES/MDM complex, which serves as a molecular tether to connect the endoplasmic reticulum (ER) and mitochondria. Components of this complex are involved in the control of mitochondrial shape and protein biogenesis, and function in nonvesicular lipid trafficking between the ER and mitochondria. MDM34 is required for the interaction of the ER-resident membrane protein MMM1 and the outer mitochondrial membrane-resident beta-barrel protein MDM10. The sequence is that of Mitochondrial distribution and morphology protein 34 from Candida albicans (strain WO-1) (Yeast).